We begin with the raw amino-acid sequence, 393 residues long: S-adenosylmethionine synthase (393 aa).

Residue histidine 16 participates in ATP binding. A Mg(2+)-binding site is contributed by aspartate 18. Glutamate 44 serves as a coordination point for K(+). L-methionine-binding residues include glutamate 57 and glutamine 100. The flexible loop stretch occupies residues 100–110; the sequence is QSNDIAQGVDH. ATP is bound by residues 167–169, 238–239, aspartate 247, 253–254, alanine 270, and lysine 274; these read DAK, RF, and RK. An L-methionine-binding site is contributed by aspartate 247. Lysine 278 lines the L-methionine pocket.

It belongs to the AdoMet synthase family. Homotetramer; dimer of dimers. The cofactor is Mg(2+). Requires K(+) as cofactor.

The protein localises to the cytoplasm. The enzyme catalyses L-methionine + ATP + H2O = S-adenosyl-L-methionine + phosphate + diphosphate. Its pathway is amino-acid biosynthesis; S-adenosyl-L-methionine biosynthesis; S-adenosyl-L-methionine from L-methionine: step 1/1. Its function is as follows. Catalyzes the formation of S-adenosylmethionine (AdoMet) from methionine and ATP. The overall synthetic reaction is composed of two sequential steps, AdoMet formation and the subsequent tripolyphosphate hydrolysis which occurs prior to release of AdoMet from the enzyme. This is S-adenosylmethionine synthase from Variovorax paradoxus (strain S110).